The chain runs to 57 residues: Metallothionein-2 (57 aa).

Positions proline 1–proline 28 are beta. A divalent metal cation is bound by residues cysteine 4, cysteine 5, cysteine 9, cysteine 11, cysteine 16, cysteine 20, cysteine 22, cysteine 25, cysteine 27, cysteine 30, cysteine 33, cysteine 37, cysteine 39, cysteine 45, cysteine 49, cysteine 53, cysteine 55, and cysteine 56. Positions proline 29–proline 57 are alpha.

The protein belongs to the metallothionein superfamily. Type 3 family.

Metallothioneins have a high content of cysteine residues that bind various heavy metals. Class I MTS in marine crustacea are involved in the sequestration of elevated levels of heavy-metal ions. This chain is Metallothionein-2, found in Scylla serrata (Mud crab).